We begin with the raw amino-acid sequence, 654 residues long: Cysteine-rich receptor-like protein kinase 40 (654 aa).

A signal peptide spans 1–27 (MGKCSALMIFLSSSLLLVLQTLHVVNA). Gnk2-homologous domains are found at residues 28 to 131 (VKCF…NQST) and 143 to 250 (WPSP…LYSF). Topologically, residues 28-287 (VKCFGNSFNG…VKKGKSIGYG (260 aa)) are extracellular. N38, N65, N128, N154, N167, and N256 each carry an N-linked (GlcNAc...) asparagine glycan. A helical membrane pass occupies residues 288-308 (GIIAIVVVFTFINLLVFIGFI). The Cytoplasmic portion of the chain corresponds to 309–654 (KVYARRGKLN…DDVFTELSCR (346 aa)). The region spanning 348-619 (FSSENTLGQG…VIIWLGSETI (272 aa)) is the Protein kinase domain. ATP contacts are provided by residues 354-362 (LGQGGFGTV) and K376. Y421 bears the Phosphotyrosine mark. The active-site Proton acceptor is D473. The residue at position 477 (S477) is a Phosphoserine. T513 carries the phosphothreonine modification. Y521 carries the post-translational modification Phosphotyrosine.

This sequence belongs to the protein kinase superfamily. Ser/Thr protein kinase family. CRK subfamily.

The protein localises to the membrane. The catalysed reaction is L-seryl-[protein] + ATP = O-phospho-L-seryl-[protein] + ADP + H(+). It catalyses the reaction L-threonyl-[protein] + ATP = O-phospho-L-threonyl-[protein] + ADP + H(+). In Arabidopsis thaliana (Mouse-ear cress), this protein is Cysteine-rich receptor-like protein kinase 40 (CRK40).